Here is a 543-residue protein sequence, read N- to C-terminus: Aluminum-activated malate transporter 14 (543 aa).

Helical transmembrane passes span 56–76 (VGVS…FKGI), 80–100 (AIWA…ATLC), 106–126 (GLGT…ANDS), 129–149 (IFRA…ITYL), 164–184 (LIFL…DTVI), and 191–211 (FYTI…VFPI). A disordered region spans residues 416–438 (DTNEAASYQNTGTPRGERMSRFG). Residues 419-428 (EAASYQNTGT) show a composition bias toward polar residues. Residues 445-472 (RLRADTLERRSAAATNERKILRQQLSRI) are a coiled coil.

The protein belongs to the aromatic acid exporter (TC 2.A.85) family.

Its subcellular location is the membrane. Its function is as follows. Malate transporter. The polypeptide is Aluminum-activated malate transporter 14 (ALMT14) (Arabidopsis thaliana (Mouse-ear cress)).